Consider the following 270-residue polypeptide: Putative protein-disulfide oxidoreductase RT0103 (270 aa).

Residues Met1 to Ala17 form the signal peptide. The region spanning Ser71–Glu264 is the Thioredoxin domain. A disulfide bridge links Cys117 with Cys120.

The protein belongs to the thioredoxin family. DsbA subfamily.

Its subcellular location is the periplasm. Its function is as follows. May be required for disulfide bond formation in some proteins. The protein is Putative protein-disulfide oxidoreductase RT0103 of Rickettsia typhi (strain ATCC VR-144 / Wilmington).